The primary structure comprises 317 residues: Type II methyltransferase M.NgoBI (317 aa).

The SAM-dependent MTase C5-type domain occupies 2-302; sequence YKTIDLFSGI…KICSLLFPAR (301 aa). The active site involves C71.

The protein belongs to the class I-like SAM-binding methyltransferase superfamily. C5-methyltransferase family.

It catalyses the reaction a 2'-deoxycytidine in DNA + S-adenosyl-L-methionine = a 5-methyl-2'-deoxycytidine in DNA + S-adenosyl-L-homocysteine + H(+). Functionally, a methylase, recognizes the double-stranded sequence 5'-RGCGCY-3', methylates C-5 on both strands, and protects the DNA from cleavage by the NgoBI endonuclease. The protein is Type II methyltransferase M.NgoBI (ngoBIM) of Neisseria gonorrhoeae.